Consider the following 1360-residue polypeptide: MAQSFTGKKRIRKSFGRIPEAVQMPNLIEVQRSSYEQFLQREVRPGVRKDEGIEAVFKSVFPIKDFNERAVLEYVSYEFEEPKYDVEECIQRDMTFAAPLKVKLRLIVFETEEETGARSVKDIKEQDVYMGDIPLMTDKGTFIVNGTERVIVSQMHRSPGVFFDHDKGKTHASGKLLFAARVIPYRGSWLDFEFDAKDVVYVRIDRRRKLPATTFLYALGMDGEEILTTFYDVVPFEKRTAAGAEGWATPYKPERWRGVKPEFALIDADSGEEVAAAGTKITARQAKKLADNGLKTLLLAPEALTGRYLARDAVNFETGEIYAEAGDELDVTSIEALAAQGFSTIDVLDIDHVTVGAYMRNTLRVDKNAVREDALFDIYRVMRPGEPPTVEAAEAMFKSLFFDAERYDLSAVGRVKMNMRLELDASDEMRVLRKEDVLAVLKLLVGLRDGRGEIDDIDNLGNRRVRSVGELLENQYRVGLLRMERAIKERMSSVDIDTVMPHDLINAKPAAASVREFFGSSQLSQFMDQTNPLSEITHKRRLSALGPGGLTRERAGFEVRDVHPTHYGRICPIETPEGPNIGLINSLATHARVNKYGFIESPYRRVADGKPLEEVVYMSAMEESKHVIAQSNIKVLNGEIVDDLVPGRINGEPTLLQKEQVDLMDVSPRQVVSVAAALIPFLENDDANRALMGSNMQRQAVPLVQSDAPLVGTGMEAVVARDSGAVVIAKRTGVVEQIDGTRIVVRATEETDAARSGVDIYRLSKFQRSNQSTCINQRPLVKVGDKISAGDIIADGPSTELGELALGRNALVAFMPWNGYNFEDSILISERIVRDDVFTSIHIEEFEVMARDTKLGPEEITRDIPNVGEEALRNLDEAGIVAIGAEVQPGDILVGKVTPKGESPMTPEEKLLRAIFGEKASDVRDTSLRLPPGVAGTIVDVRVFNRHGVDKDERALAIERAEIDRLGKDRDDEFAILNRNISGRLRELLIGNVALSGPKGLSRGQITAEGLAEVQPGLWWQIALEDEKAMGELESLRRLFDENRKRLDRRFEDKVDKLQRGDELPPGVMKMVKVFVAVKRKLQPGDKMAGRHGNKGVISRILPIEDMPFLADGTHVDVVLNPLGVPSRMNVGQIFETHLGWACAGLGKQITTLLEDWQAGGQKQALIDRLTEIYGPDEELPETEEELVELARNLGKGVPIATPVFDGARIGDIEDHLRMAGLDPSGQSILYDGQTGEQFKRPVTVGYIYMLKLHHLVDDKIHARSIGPYSLVTQQPLGGKAQFGGQRFGEMEVWALEAYGAAYTLQEMLTVKSDDVAGRTKVYESIVRGDDTFEAGIPESFNVLVKEMRSLGLNVELENS.

The protein belongs to the RNA polymerase beta chain family. The RNAP catalytic core consists of 2 alpha, 1 beta, 1 beta' and 1 omega subunit. When a sigma factor is associated with the core the holoenzyme is formed, which can initiate transcription.

It carries out the reaction RNA(n) + a ribonucleoside 5'-triphosphate = RNA(n+1) + diphosphate. DNA-dependent RNA polymerase catalyzes the transcription of DNA into RNA using the four ribonucleoside triphosphates as substrates. In Caulobacter sp. (strain K31), this protein is DNA-directed RNA polymerase subunit beta.